A 681-amino-acid polypeptide reads, in one-letter code: Methionine--tRNA ligase (681 aa).

Positions 27 to 37 (DYANGTPHIGH) match the 'HIGH' region motif. The short motif at 316–320 (KMGKS) is the 'KMSKS' region element. Lys319 is a binding site for ATP. Residues 522–571 (FPKPEPKADETKNAEAKPPKPQAKKEKKTVTDTAPAKTTEQKPEAAAPAQ) form a disordered region. Basic and acidic residues predominate over residues 525–539 (PEPKADETKNAEAKP). Residues 580-681 (DFAKIDLRIA…LDLPSGTKVR (102 aa)) enclose the tRNA-binding domain.

The protein belongs to the class-I aminoacyl-tRNA synthetase family. MetG type 2B subfamily. As to quaternary structure, homodimer.

It localises to the cytoplasm. The enzyme catalyses tRNA(Met) + L-methionine + ATP = L-methionyl-tRNA(Met) + AMP + diphosphate. In terms of biological role, is required not only for elongation of protein synthesis but also for the initiation of all mRNA translation through initiator tRNA(fMet) aminoacylation. In Deinococcus radiodurans (strain ATCC 13939 / DSM 20539 / JCM 16871 / CCUG 27074 / LMG 4051 / NBRC 15346 / NCIMB 9279 / VKM B-1422 / R1), this protein is Methionine--tRNA ligase (metG).